A 352-amino-acid chain; its full sequence is Biotin synthase (352 aa).

Residues 44–262 (NRVQVSTLLS…LAVARILMPQ (219 aa)) form the Radical SAM core domain. The [4Fe-4S] cluster site is built by C59, C63, and C66. Positions 103, 134, 194, and 266 each coordinate [2Fe-2S] cluster.

This sequence belongs to the radical SAM superfamily. Biotin synthase family. Homodimer. The cofactor is [4Fe-4S] cluster. It depends on [2Fe-2S] cluster as a cofactor.

It catalyses the reaction (4R,5S)-dethiobiotin + (sulfur carrier)-SH + 2 reduced [2Fe-2S]-[ferredoxin] + 2 S-adenosyl-L-methionine = (sulfur carrier)-H + biotin + 2 5'-deoxyadenosine + 2 L-methionine + 2 oxidized [2Fe-2S]-[ferredoxin]. It participates in cofactor biosynthesis; biotin biosynthesis; biotin from 7,8-diaminononanoate: step 2/2. In terms of biological role, catalyzes the conversion of dethiobiotin (DTB) to biotin by the insertion of a sulfur atom into dethiobiotin via a radical-based mechanism. This Pseudomonas savastanoi pv. phaseolicola (strain 1448A / Race 6) (Pseudomonas syringae pv. phaseolicola (strain 1448A / Race 6)) protein is Biotin synthase.